The following is a 362-amino-acid chain: MGFKCGIIGLPNVGKSTLFNVLTKGNSAVANFPFCTIKPNIGIVSVPDNRINNLSKIILPKKITNAFIEFVDIAGLVKGASKGEGLGNQFLSNIRDTHAIAHVVRCFKDDNVSHIYNQLQPKIDVDIINSELILADFETCEKSILKLQKKLNFNKKEIEEKLVVLSKCLDHLKKFLMLKTLELDENEKKIISYLRFLTLKPTMYIANINEQKESCFFLNELEKMAKKEGSSVIPINSNLELDLIKMNEDEQKYFMKSFNITNLGLNNIIKSGYKILNLITFFTAGIKEVRAWAIPNGSTSLQAADKIHSDFRRGFIRAQIINYLDFIKYKSETKVKEAGKYRSEGKFYQIQDGDIINFLFNV.

An OBG-type G domain is found at 3-255 (FKCGIIGLPN…MNEDEQKYFM (253 aa)). 12–17 (NVGKST) lines the ATP pocket. 2 residues coordinate Mg(2+): Ser16 and Thr36. The region spanning 277–360 (NLITFFTAGI…QDGDIINFLF (84 aa)) is the TGS domain.

The protein belongs to the TRAFAC class OBG-HflX-like GTPase superfamily. OBG GTPase family. YchF/OLA1 subfamily. Mg(2+) serves as cofactor.

Functionally, ATPase that binds to both the 70S ribosome and the 50S ribosomal subunit in a nucleotide-independent manner. This Buchnera aphidicola subsp. Schizaphis graminum (strain Sg) protein is Ribosome-binding ATPase YchF.